The chain runs to 155 residues: Cathelicidin-1 (155 aa).

A signal peptide spans 1–29; the sequence is METQRASLSLGRCSLWLLLLGLALPSASA. Q30 carries the pyrrolidone carboxylic acid modification. Residues 30–143 constitute a propeptide that is removed on maturation; that stretch reads QVLSYREAVL…KQPWAPPQAA (114 aa). Disulfide bonds link C85–C96, C107–C124, and C146–C154.

This sequence belongs to the cathelicidin family.

The protein localises to the secreted. Potent microbicidal activity; active against S.aureus and E.coli. The protein is Cathelicidin-1 (CATHL1A) of Ovis aries (Sheep).